A 146-amino-acid polypeptide reads, in one-letter code: Hemoglobin subunit beta (146 aa).

Val1 is subject to N-acetylvaline. In terms of domain architecture, Globin spans 2 to 146 (HLTADEKSAV…VATALGHKYH (145 aa)). At Thr12 the chain carries Phosphothreonine. Phosphoserine is present on Ser44. Residue Lys59 is modified to N6-acetyllysine. His63 contributes to the heme b binding site. Position 82 is an N6-acetyllysine (Lys82). Position 92 (His92) interacts with heme b. Cys93 carries the post-translational modification S-nitrosocysteine. N6-acetyllysine is present on Lys144.

The protein belongs to the globin family. Heterotetramer of two alpha chains and two beta chains. In terms of tissue distribution, red blood cells.

In terms of biological role, involved in oxygen transport from the lung to the various peripheral tissues. This is Hemoglobin subunit beta (HBB) from Antrozous pallidus (Pallid bat).